We begin with the raw amino-acid sequence, 309 residues long: MAATRHNERDGLSDLRRDRQRKSGKMAPSPSKRKERSEDRAKDRGKEKAPGKEGTDKDRGRDKARKRRSASSGSSSSSRSRSSSSSSSSSGSSSGSSSGSSSSSASSRSGSSSSSRSSSSSSSSGSPSPSRRRHDNRRRSRSKSKQPKRDEKERKRRSPSPRPTKVHIGRLTRNVTKDHILEIFSTYGKIKMIDMPVDRYHPHLSKGYAYVEFEAPEEAEKALKHMDGGQIDGQEITASAVLTPWPMRAMPRRFSPPRRMLPPPPMWRRSPPRMRRRSRSPRRRSPVRRRSRSPARRRHRSRSSSNSSR.

Composition is skewed to basic and acidic residues over residues Met-1–Arg-17 and Glu-35–Arg-61. Disordered regions lie at residues Met-1–Val-166 and Ala-249–Arg-309. Over residues Ala-70–Pro-129 the composition is skewed to low complexity. Basic residues-rich tracts occupy residues Ser-130–Gln-146, Arg-154–Val-166, and Ser-270–Arg-302. Residues Thr-164–Thr-243 form the RRM domain.

Belongs to the splicing factor SR family. In terms of assembly, component of the active spliceosome.

It is found in the nucleus. The protein resides in the nucleus speckle. It localises to the cytoplasm. Component of a splicing-dependent multiprotein exon junction complex (EJC) deposited at splice junction on mRNAs. The EJC is a dynamic structure consisting of a few core proteins and several more peripheral nuclear and cytoplasmic associated factors that join the complex only transiently either during EJC assembly or during subsequent mRNA metabolism. Putative component of the spliceosome which enhances the formation of the ATP-dependent A complex of the spliceosome. May participate in mRNA 3'-end cleavage. Also mediates increase of mRNA abundance and translational efficiency. This Xenopus tropicalis (Western clawed frog) protein is RNA-binding protein with serine-rich domain 1 (rnps1).